The following is a 116-amino-acid chain: SPbeta prophage-derived uncharacterized protein YomQ (116 aa).

This chain is SPbeta prophage-derived uncharacterized protein YomQ (yomQ), found in Bacillus subtilis (strain 168).